We begin with the raw amino-acid sequence, 1267 residues long: DNA-directed RNA polymerase subunit beta'' (1267 aa).

Zn(2+)-binding residues include Cys-222, Cys-290, Cys-297, and Cys-300.

Belongs to the RNA polymerase beta' chain family. RpoC2 subfamily. As to quaternary structure, in plastids the minimal PEP RNA polymerase catalytic core is composed of four subunits: alpha, beta, beta', and beta''. When a (nuclear-encoded) sigma factor is associated with the core the holoenzyme is formed, which can initiate transcription. It depends on Zn(2+) as a cofactor.

The protein localises to the plastid. The protein resides in the chloroplast. The enzyme catalyses RNA(n) + a ribonucleoside 5'-triphosphate = RNA(n+1) + diphosphate. Functionally, DNA-dependent RNA polymerase catalyzes the transcription of DNA into RNA using the four ribonucleoside triphosphates as substrates. This is DNA-directed RNA polymerase subunit beta'' from Emiliania huxleyi (Coccolithophore).